We begin with the raw amino-acid sequence, 225 residues long: ATP-dependent dethiobiotin synthetase BioD 1 (225 aa).

13 to 18 (EVGKTV) contacts ATP. Threonine 17 is a binding site for Mg(2+). The active site involves lysine 38. Residue serine 42 participates in substrate binding. ATP is bound by residues aspartate 55, 116–119 (EGAG), 176–177 (ND), 205–207 (PWL), and glutamate 212. Mg(2+)-binding residues include aspartate 55 and glutamate 116.

Belongs to the dethiobiotin synthetase family. Homodimer. Mg(2+) serves as cofactor.

It is found in the cytoplasm. The enzyme catalyses (7R,8S)-7,8-diammoniononanoate + CO2 + ATP = (4R,5S)-dethiobiotin + ADP + phosphate + 3 H(+). It functions in the pathway cofactor biosynthesis; biotin biosynthesis; biotin from 7,8-diaminononanoate: step 1/2. In terms of biological role, catalyzes a mechanistically unusual reaction, the ATP-dependent insertion of CO2 between the N7 and N8 nitrogen atoms of 7,8-diaminopelargonic acid (DAPA, also called 7,8-diammoniononanoate) to form a ureido ring. This Escherichia coli O157:H7 protein is ATP-dependent dethiobiotin synthetase BioD 1.